An 853-amino-acid polypeptide reads, in one-letter code: DNA mismatch repair protein MutS (853 aa).

616–623 (GPNMGGKS) is an ATP binding site.

It belongs to the DNA mismatch repair MutS family.

Functionally, this protein is involved in the repair of mismatches in DNA. It is possible that it carries out the mismatch recognition step. This protein has a weak ATPase activity. The sequence is that of DNA mismatch repair protein MutS from Erwinia tasmaniensis (strain DSM 17950 / CFBP 7177 / CIP 109463 / NCPPB 4357 / Et1/99).